The sequence spans 548 residues: Putative malate oxidoreductase [NAD] (548 aa).

Catalysis depends on Tyr96, which acts as the Proton donor. The Proton acceptor role is filled by Lys169. A divalent metal cation is bound by residues Glu240, Asp241, and Asp264. Residues 297-300, Asn410, and Asn455 contribute to the NAD(+) site; that span reads AGTA.

This sequence belongs to the malic enzymes family. Mg(2+) is required as a cofactor. It depends on Mn(2+) as a cofactor.

It catalyses the reaction (S)-malate + NAD(+) = pyruvate + CO2 + NADH. It carries out the reaction oxaloacetate + H(+) = pyruvate + CO2. The polypeptide is Putative malate oxidoreductase [NAD] (mez) (Mycobacterium tuberculosis (strain CDC 1551 / Oshkosh)).